A 283-amino-acid chain; its full sequence is 4-diphosphocytidyl-2-C-methyl-D-erythritol kinase (283 aa).

Lysine 11 is an active-site residue. 94 to 104 lines the ATP pocket; sequence PVAAGLAGGSA. Residue aspartate 136 is part of the active site.

This sequence belongs to the GHMP kinase family. IspE subfamily.

It carries out the reaction 4-CDP-2-C-methyl-D-erythritol + ATP = 4-CDP-2-C-methyl-D-erythritol 2-phosphate + ADP + H(+). It functions in the pathway isoprenoid biosynthesis; isopentenyl diphosphate biosynthesis via DXP pathway; isopentenyl diphosphate from 1-deoxy-D-xylulose 5-phosphate: step 3/6. Its function is as follows. Catalyzes the phosphorylation of the position 2 hydroxy group of 4-diphosphocytidyl-2C-methyl-D-erythritol. The polypeptide is 4-diphosphocytidyl-2-C-methyl-D-erythritol kinase (Acetivibrio thermocellus (strain ATCC 27405 / DSM 1237 / JCM 9322 / NBRC 103400 / NCIMB 10682 / NRRL B-4536 / VPI 7372) (Clostridium thermocellum)).